The chain runs to 881 residues: NACHT, LRR and PYD domains-containing protein 6 (881 aa).

The region spanning 1–129 (MDAAGASCSS…EHVLRQHAKV (129 aa)) is the Pyrin domain. The residue at position 104 (S104) is a Phosphoserine. The segment at 154 to 175 (AGEDELLGTSGEPEPERARRSD) is disordered. The 317-residue stretch at 194–510 (LTVVLQGPAG…EFLAALSYLL (317 aa)) folds into the NACHT domain. 200 to 207 (GPAGIGKT) is an ATP binding site. One copy of the LRR 1 repeat lies at 459–484 (EKDLERLKLQGSQVQTMFLSKKELPG). Residues 579–611 (QSQPKVATVGAEKKDELKDEEAEEEEEEEEEEE) form a disordered region. The segment covering 596–611 (KDEEAEEEEEEEEEEE) has biased composition (acidic residues). LRR repeat units lie at residues 637-660 (LSSL…VLSY), 749-772 (APSL…LLSQ), and 839-863 (TLSL…TLKP).

Belongs to the NLRP family. In terms of assembly, homomultimer; forms the NLRP6 inflammasome polymeric complex, a filament composed of homopolymers in response to pathogens and other damage-associated signals. The core of NLRP6 inflammasomes consists of a signal sensor component (NLRP6), an adapter (PYCARD/ASC), which recruits effector pro-inflammatory caspases (CASP1 and CASP4). Interacts (via pyrin domain) with PYCARD/ASC (via pyrin domain); interaction takes place following NLRP6 activation and formation of liquid-liquid phase separation (LLPS), initiating nucleation which greatly enhances further addition of soluble PYCARD/ASC molecules to the speck in a prion-like polymerization process. Clustered PYCARD/ASC nucleates the formation of CASP1 (or possibly CASP4) filaments through the interaction of their respective CARD domains, acting as a platform for CASP1 polymerization. CASP1 filament formation increases local enzyme concentration, resulting in trans-autocleavage and activation. Active CASP1 then processes IL1B and IL18 precursors, leading to the release of mature cytokines in the extracellular milieu and inflammatory response. Interacts with DHX15. Post-translationally, polyubiquitinated with 'Lys-63'-linked chains, promoting the interaction with PYCARD/ASC and formation of the NLRP6 inflammasome. Deubiquitination by CYLD decreases the interaction with PYCARD/ASC. In terms of tissue distribution, detected in several tissues. Expressed in renal epithelial cells in medullary thick ascending limb of Henle, as well as in salivary gland apical epithelium (at protein level). Isoform 1 is widely expressed. Isoform 2 is primarily expressed in kidney (at protein level).

It is found in the cytoplasm. The protein localises to the inflammasome. The protein resides in the cell membrane. Its subcellular location is the nucleus membrane. Its function is as follows. Acts as the sensor component of the NLRP6 inflammasome, which mediates inflammasome activation in response to various pathogen-associated signals, leading to maturation and secretion of IL1B and IL18. Inflammasomes are supramolecular complexes that assemble in the cytosol in response to pathogens and other damage-associated signals and play critical roles in innate immunity and inflammation. Acts as a recognition receptor (PRR): recognizes and binds specific pathogens and other damage-associated signals, such as lipoteichoic acid (LTA), a cell-wall component of Gram-positive bacteria, or double stranded RNA (dsRNA). May also recognize and bind lipopolysaccharide (LPS), a major component of the outer membrane of Gram-negative bacteria; however, LPS is probably not a major activator of the NLRP6 inflammasome. Following LTA- or dsRNA-binding, NLRP6 undergoes liquid-liquid phase separation (LLPS), enhancing multivalent interactions, an essential step for the formation of the NLRP6 inflammasome polymeric complex. The NLRP6 inflammasome acts by promoting recruitment of effector pro-inflammatory caspases (CASP1 and/or CASP4) that catalyze maturation and secretion of IL1B and IL18 in the extracellular milieu. The NLRP6 inflammasome plays a central role in the maintenance of epithelial integrity and host defense against microbial infections in the intestine. Required to restrict infection against Gram-positive bacteria by recognizing lipoteichoic acid (LTA), leading to recruitment of CASP4 and CASP1, and subsequent maturation and secretion of IL1B and IL18. Involved in intestinal antiviral innate immunity together with DHX15: recognizes and binds viral dsRNA to restrict infection by enteric viruses through the interferon pathway and GSDMD-dependent release of IL18. Required to prevent infection by the apicomplexan parasite Cryptosporidium in enterocytes by promoting GSDMD-dependent release of IL18. The NLRP6 inflammasome may also regulate the gut microbiota composition by acting as a sensor of microbiota-associated metabolites to form a PYCARD/ASC-dependent inflammasome for downstream IL18 release and secretion of antimicrobial peptides. Essential for gut mucosal self-renewal and proliferation. Regulate mucus secretion in an inflammasome- and autophagy-dependent manner to prevent invasion by enteric bacteria,. During systemic bacterial infections, the NLRP6 inflammasome negatively regulates neutrophil recruitment and neutrophil extracellular traps (NETs) formation. May promote peripheral nerve recovery following injury via an inflammasome-independent mechanism. The chain is NACHT, LRR and PYD domains-containing protein 6 from Rattus norvegicus (Rat).